Reading from the N-terminus, the 246-residue chain is Zinc import ATP-binding protein ZnuC (246 aa).

An ABC transporter domain is found at 24–244; it reads LKIENLALAY…TLGEIFSSYI (221 aa). Position 56 to 63 (56 to 63) interacts with ATP; that stretch reads GPNGGGKT.

This sequence belongs to the ABC transporter superfamily. Zinc importer (TC 3.A.1.15.5) family. In terms of assembly, the complex is composed of two ATP-binding proteins (ZnuC), two transmembrane proteins (ZnuB) and a solute-binding protein (ZnuA).

The protein localises to the cell membrane. The enzyme catalyses Zn(2+)(out) + ATP(in) + H2O(in) = Zn(2+)(in) + ADP(in) + phosphate(in) + H(+)(in). Its function is as follows. Part of the ABC transporter complex ZnuABC involved in zinc import. Responsible for energy coupling to the transport system. The polypeptide is Zinc import ATP-binding protein ZnuC (Wolbachia sp. subsp. Brugia malayi (strain TRS)).